The chain runs to 109 residues: Phosphoribosyl-AMP cyclohydrolase (109 aa).

Residue Asp80 coordinates Mg(2+). Cys81 is a Zn(2+) binding site. The Mg(2+) site is built by Asp82 and Asp84. Zn(2+)-binding residues include Cys97 and Cys104.

The protein belongs to the PRA-CH family. In terms of assembly, homodimer. Mg(2+) is required as a cofactor. The cofactor is Zn(2+).

It localises to the cytoplasm. It carries out the reaction 1-(5-phospho-beta-D-ribosyl)-5'-AMP + H2O = 1-(5-phospho-beta-D-ribosyl)-5-[(5-phospho-beta-D-ribosylamino)methylideneamino]imidazole-4-carboxamide. The protein operates within amino-acid biosynthesis; L-histidine biosynthesis; L-histidine from 5-phospho-alpha-D-ribose 1-diphosphate: step 3/9. In terms of biological role, catalyzes the hydrolysis of the adenine ring of phosphoribosyl-AMP. This Clostridium beijerinckii (strain ATCC 51743 / NCIMB 8052) (Clostridium acetobutylicum) protein is Phosphoribosyl-AMP cyclohydrolase.